A 123-amino-acid polypeptide reads, in one-letter code: Omega-oxotoxin-Ot1a (123 aa).

The signal sequence occupies residues 1 to 16; that stretch reads MKIVLVFVCTLYLAQA. Residues 17-54 constitute a propeptide that is removed on maturation; the sequence is TYLSEQDVNEVSEFLEALDQANEAASEMVEAAETEEAR. The 68-residue stretch at 55–122 folds into the Oxytoxin-type inhibitor cystine knot (ICK) domain; the sequence is DWECLPLHSS…GKINTCDKYK (68 aa). 5 cysteine pairs are disulfide-bonded: Cys-58–Cys-72, Cys-65–Cys-77, Cys-69–Cys-118, Cys-71–Cys-106, and Cys-79–Cys-104.

It belongs to the spiderine family. Spiderine subfamily. Mass spectrometry data suggest a carboxylated free C-terminal residue. In terms of tissue distribution, expressed by the venom gland.

Its subcellular location is the secreted. Its function is as follows. Weak blocker of vertebrate P/Q-, N- and L-type voltage-gated calcium channels (Cav1 and Cav2). Is both paralytic and lethal when injected into lepidopteran larvae. Is not toxic to mice. The polypeptide is Omega-oxotoxin-Ot1a (Oxyopes takobius (Lynx spider)).